Here is an 816-residue protein sequence, read N- to C-terminus: uncharacterized protein (816 aa).

Disordered stretches follow at residues 1–34 (MLFN…QQES), 65–101 (RQNN…GYKN), 154–406 (DEKD…ENPE), and 770–816 (RQHK…VMYA). Low complexity predominate over residues 18–32 (NQSSANTQNQQAHQQ). Residues 83-92 (VSATSAYSKQ) show a composition bias toward polar residues. Positions 161–223 (TTTSSSTSTS…STSTTSTSTT (63 aa)) are enriched in low complexity. Positions 246–260 (ESTSIGKGTADSAQI) are enriched in polar residues. Serine 286 bears the Phosphoserine mark. Positions 292-316 (DEQKEEKSDVKKVNPPSGEEKKEVE) are enriched in basic and acidic residues. The span at 317 to 326 (AEGDAEEETE) shows a compositional bias: acidic residues. Low complexity predominate over residues 327 to 342 (QSSAEESAERTSTPET). A phosphoserine mark is found at serine 343 and serine 347. A compositionally biased stretch (acidic residues) spans 343 to 353 (SEPESEEDESP). A compositionally biased stretch (low complexity) spans 380–396 (KSPTSSSTQKSKTAAPS). Basic and acidic residues-rich tracts occupy residues 770-792 (RQHK…DRSQ) and 799-816 (PKDD…VMYA). Position 809 is a phosphothreonine (threonine 809).

Pyrophosphorylated by 5-diphosphoinositol pentakisphosphate (5-IP7). Serine pyrophosphorylation is achieved by Mg(2+)-dependent, but enzyme independent transfer of a beta-phosphate from a inositol pyrophosphate to a pre-phosphorylated serine residue.

This is an uncharacterized protein from Saccharomyces cerevisiae (strain ATCC 204508 / S288c) (Baker's yeast).